A 559-amino-acid chain; its full sequence is Nucleoprotein (559 aa).

Residues methionine 53–isoleucine 235 form a binding site for the cap structure m7GTP region. Positions 378 and 380 each coordinate Mn(2+). Glutamate 388, cysteine 495, histidine 498, and cysteine 519 together coordinate Zn(2+). Aspartate 523 is a binding site for Mn(2+).

This sequence belongs to the arenaviridae nucleocapsid protein family. In terms of assembly, homomultimerizes to form the nucleocapsid. Binds to viral genomic RNA. Interacts with glycoprotein G2. Interacts with protein Z; this interaction probably directs the encapsidated genome to budding sites. Interacts with protein L; this interaction does not interfere with Z-L interaction. Interacts with host IKBKE (via Protein kinase domain); the interaction inhibits IKBKE kinase activity.

The protein resides in the virion. Its subcellular location is the host cytoplasm. Functionally, encapsidates the genome, protecting it from nucleases. The encapsidated genomic RNA is termed the nucleocapsid (NC). Serves as template for viral transcription and replication. The increased presence of protein N in host cell does not seem to trigger the switch from transcription to replication as observed in other negative strain RNA viruses. Through the interaction with host IKBKE, strongly inhibits the phosphorylation and nuclear translocation of host IRF3, a protein involved in interferon activation pathway, leading to the inhibition of interferon-beta and IRF3-dependent promoters activation. Also encodes a functional 3'-5' exoribonuclease that degrades preferentially dsRNA substrates and thereby participates in the suppression of interferon induction. In Sooretamys angouya (Paraguayan rice rat), this protein is Nucleoprotein.